Reading from the N-terminus, the 161-residue chain is 6,7-dimethyl-8-ribityllumazine synthase (161 aa).

5-amino-6-(D-ribitylamino)uracil contacts are provided by residues Trp-31, 63 to 65 (SFE), and 85 to 87 (VVI). 90-91 (GT) lines the (2S)-2-hydroxy-3-oxobutyl phosphate pocket. His-93 serves as the catalytic Proton donor. Phe-118 contributes to the 5-amino-6-(D-ribitylamino)uracil binding site. Arg-132 lines the (2S)-2-hydroxy-3-oxobutyl phosphate pocket.

It belongs to the DMRL synthase family.

It carries out the reaction (2S)-2-hydroxy-3-oxobutyl phosphate + 5-amino-6-(D-ribitylamino)uracil = 6,7-dimethyl-8-(1-D-ribityl)lumazine + phosphate + 2 H2O + H(+). The protein operates within cofactor biosynthesis; riboflavin biosynthesis; riboflavin from 2-hydroxy-3-oxobutyl phosphate and 5-amino-6-(D-ribitylamino)uracil: step 1/2. Its function is as follows. Catalyzes the formation of 6,7-dimethyl-8-ribityllumazine by condensation of 5-amino-6-(D-ribitylamino)uracil with 3,4-dihydroxy-2-butanone 4-phosphate. This is the penultimate step in the biosynthesis of riboflavin. This chain is 6,7-dimethyl-8-ribityllumazine synthase, found in Paenarthrobacter aurescens (strain TC1).